The primary structure comprises 662 residues: Polyunsaturated fatty acid (12S)/(13S)-lipoxygenase, epidermal-type (662 aa).

In terms of domain architecture, PLAT spans G2 to L114. Residues L114–I662 form the Lipoxygenase domain. Positions 360, 365, 540, 544, and 662 each coordinate Fe cation.

This sequence belongs to the lipoxygenase family. Fe cation is required as a cofactor.

It localises to the cytoplasm. It catalyses the reaction (5Z,8Z,11Z,14Z)-eicosatetraenoate + O2 = (12S)-hydroperoxy-(5Z,8Z,10E,14Z)-eicosatetraenoate. The enzyme catalyses 1-O-methyl-(9Z,12Z)-octadecadienoate + O2 = 1-O-methyl-(13S)-hydroperoxy-(9Z,11E)-octadecadienoate. The catalysed reaction is (8Z,11Z,14Z)-eicosatrienoate + O2 = (12S)-hydroperoxy-(8Z,10E,14Z)-eicosatrienoate. It carries out the reaction (5Z,8Z,11Z)-eicosatrienoate + O2 = (12S)-hydroperoxy-(5Z,8Z,10E)-eicosatrienoate. It catalyses the reaction 1-O-methyl-(5Z,8Z,11Z,14Z)-eicosatetraenoate + O2 = 1-O-methyl-(12S)-hydroperoxy-(5Z,8Z,10E,14Z)-eicosatetraenoate. The enzyme catalyses (9Z,12Z)-octadecadienoate + O2 = (13S)-hydroperoxy-(9Z,11E)-octadecadienoate. The catalysed reaction is (4Z,7Z,10Z,13Z,16Z,19Z)-docosahexaenoate + O2 = (14S)-hydroperoxy-(4Z,7Z,10Z,12E,16Z,19Z)-docosahexaenoate. The protein operates within lipid metabolism; hydroperoxy eicosatetraenoic acid biosynthesis. Arachidonate 12-lipoxygenase activity is decreased when the pH decreases from 7.4 to 6.0. Catalyzes the regio and stereo-specific incorporation of a single molecule of dioxygen into free and esterified polyunsaturated fatty acids generating lipid hydroperoxides that can be further reduced to the corresponding hydroxy species. Shows increasing catalytic activity within the series arachidonic acid &lt; 5,8,11-eicosatrienoic acid &lt; linoleic acid &lt; 8,11,14-eicosatrienoic acid. The polypeptide is Polyunsaturated fatty acid (12S)/(13S)-lipoxygenase, epidermal-type (Rattus norvegicus (Rat)).